The chain runs to 440 residues: Enolase (440 aa).

Positions 159 and 168 each coordinate substrate. The Proton donor role is filled by Glu211. Residues Asp245, Glu296, and Asp321 each contribute to the Mg(2+) site. Positions 296 and 321 each coordinate substrate. Lys346 (proton acceptor) is an active-site residue. Substrate contacts are provided by residues 373 to 376 (SHRS) and Lys397.

Belongs to the enolase family. Homodimer. Requires Mg(2+) as cofactor.

The protein resides in the cytoplasm. It carries out the reaction (2R)-2-phosphoglycerate = phosphoenolpyruvate + H2O. Its pathway is carbohydrate degradation; glycolysis; pyruvate from D-glyceraldehyde 3-phosphate: step 4/5. In Tuber borchii (White truffle), this protein is Enolase (eno-1).